Consider the following 304-residue polypeptide: Taste receptor type 2 member 4 (304 aa).

Over 1–10 (MLWELYAFVF) the chain is Extracellular. A helical membrane pass occupies residues 11–31 (AASVVFNFVGIVANLFIIVII). Residues 32–46 (SKTWVKSHKISSSDK) lie on the Cytoplasmic side of the membrane. A helical transmembrane segment spans residues 47–67 (ILFSLAITRFLTLGLFLLNTV). At 68 to 80 (YIATNTGRSVYFS) the chain is on the extracellular side. Residues 81–101 (TFFLLCWKFLDSNSLWLVTFL) traverse the membrane as a helical segment. At 102 to 128 (NCLYCVKITHFQHPVFLLLKRTVSMKT) the chain is on the cytoplasmic side. A helical transmembrane segment spans residues 129 to 149 (TSLLLACLLISAFTTLLYFVL). Over 150–171 (TQISRFPEHIIGRNDTLFDVSD) the chain is Extracellular. The N-linked (GlcNAc...) asparagine glycan is linked to N163. A helical membrane pass occupies residues 172–192 (GILTLAASLILSSLLQFLLNV). Topologically, residues 193-229 (TFASLLIHSLRRHVQKMQRNRSSFWNPQTEAHVGAMR) are cytoplasmic. A helical membrane pass occupies residues 230 to 250 (LMICFLVLYIPYSIAALLYFP). The Extracellular portion of the chain corresponds to 251-260 (SYMRKNLRAQ). Residues 261–281 (AACMIITAAYPPGHSILLIIT) traverse the membrane as a helical segment. The Cytoplasmic segment spans residues 282 to 304 (HHKLKAKAKKICCFYKLRDFVSN).

The protein belongs to the G-protein coupled receptor T2R family. In terms of tissue distribution, expressed in tongue, stomach and duodenum.

The protein localises to the membrane. It is found in the cell projection. The protein resides in the cilium membrane. In terms of biological role, gustducin-coupled receptor implicated in the perception of bitter compounds in the oral cavity and the gastrointestinal tract. Signals through PLCB2 and the calcium-regulated cation channel TRPM5. In airway epithelial cells, binding of denatonium increases the intracellular calcium ion concentration and stimulates ciliary beat frequency. The protein is Taste receptor type 2 member 4 of Rattus norvegicus (Rat).